Consider the following 67-residue polypeptide: Large ribosomal subunit protein bL31 (67 aa).

Belongs to the bacterial ribosomal protein bL31 family. Type A subfamily. In terms of assembly, part of the 50S ribosomal subunit.

Binds the 23S rRNA. This Wolinella succinogenes (strain ATCC 29543 / DSM 1740 / CCUG 13145 / JCM 31913 / LMG 7466 / NCTC 11488 / FDC 602W) (Vibrio succinogenes) protein is Large ribosomal subunit protein bL31.